The following is a 294-amino-acid chain: Pyridoxal 5'-phosphate synthase subunit PdxS (294 aa).

Aspartate 24 is a binding site for D-ribose 5-phosphate. Lysine 81 serves as the catalytic Schiff-base intermediate with D-ribose 5-phosphate. Glycine 153 is a binding site for D-ribose 5-phosphate. Arginine 165 is a binding site for D-glyceraldehyde 3-phosphate. Residues glycine 214 and 235–236 (GS) each bind D-ribose 5-phosphate.

The protein belongs to the PdxS/SNZ family. As to quaternary structure, homohexamer and homododecamer. In the presence of PdxT, forms a dodecamer of heterodimers.

It carries out the reaction aldehydo-D-ribose 5-phosphate + D-glyceraldehyde 3-phosphate + L-glutamine = pyridoxal 5'-phosphate + L-glutamate + phosphate + 3 H2O + H(+). Its pathway is cofactor biosynthesis; pyridoxal 5'-phosphate biosynthesis. Functionally, catalyzes the formation of pyridoxal 5'-phosphate from ribose 5-phosphate (RBP), glyceraldehyde 3-phosphate (G3P) and ammonia. The ammonia is provided by the PdxT subunit. Can also use ribulose 5-phosphate and dihydroxyacetone phosphate as substrates, resulting from enzyme-catalyzed isomerization of RBP and G3P, respectively. The chain is Pyridoxal 5'-phosphate synthase subunit PdxS from Bacillus subtilis (strain 168).